A 640-amino-acid polypeptide reads, in one-letter code: 1-deoxy-D-xylulose-5-phosphate synthase (640 aa).

Thiamine diphosphate is bound by residues histidine 79 and 120 to 122; that span reads GHS. Aspartate 151 serves as a coordination point for Mg(2+). Thiamine diphosphate is bound by residues 152–153, asparagine 180, tyrosine 287, and glutamate 369; that span reads GA. Asparagine 180 lines the Mg(2+) pocket.

The protein belongs to the transketolase family. DXPS subfamily. As to quaternary structure, homodimer. The cofactor is Mg(2+). Thiamine diphosphate is required as a cofactor.

It catalyses the reaction D-glyceraldehyde 3-phosphate + pyruvate + H(+) = 1-deoxy-D-xylulose 5-phosphate + CO2. It participates in metabolic intermediate biosynthesis; 1-deoxy-D-xylulose 5-phosphate biosynthesis; 1-deoxy-D-xylulose 5-phosphate from D-glyceraldehyde 3-phosphate and pyruvate: step 1/1. Functionally, catalyzes the acyloin condensation reaction between C atoms 2 and 3 of pyruvate and glyceraldehyde 3-phosphate to yield 1-deoxy-D-xylulose-5-phosphate (DXP). This is 1-deoxy-D-xylulose-5-phosphate synthase from Thioalkalivibrio sulfidiphilus (strain HL-EbGR7).